The chain runs to 463 residues: Fumarate hydratase class II (463 aa).

Substrate is bound by residues 95–97 (SGT), 126–129 (HPND), 136–138 (SSN), and Thr184. The active-site Proton donor/acceptor is His185. The active site involves Ser315. Substrate is bound by residues Ser316 and 321–323 (KIN).

Belongs to the class-II fumarase/aspartase family. Fumarase subfamily. In terms of assembly, homotetramer.

It is found in the cytoplasm. It carries out the reaction (S)-malate = fumarate + H2O. It functions in the pathway carbohydrate metabolism; tricarboxylic acid cycle; (S)-malate from fumarate: step 1/1. Functionally, involved in the TCA cycle. Catalyzes the stereospecific interconversion of fumarate to L-malate. This is Fumarate hydratase class II from Chlamydia trachomatis serovar D (strain ATCC VR-885 / DSM 19411 / UW-3/Cx).